A 511-amino-acid chain; its full sequence is Serine/threonine-protein kinase Nek3 (511 aa).

The residue at position 1 (methionine 1) is an N-acetylmethionine. Positions 1 to 282 (MDNYTVLRVI…EQILDEIKIS (282 aa)) are interaction with VAV2. Residues 4-255 (YTVLRVIGQG…ATTLLCRGSL (252 aa)) enclose the Protein kinase domain. ATP-binding positions include 10–18 (IGQGSFGRA) and lysine 33. The active-site Proton acceptor is aspartate 125. Threonine 159 is subject to Phosphothreonine; by autocatalysis. 2 disordered regions span residues 299–370 (LGEA…GPSS) and 443–511 (GPLS…GERA). Over residues 309–321 (EEERGRKCSHTEL) the composition is skewed to basic and acidic residues. The segment covering 472 to 485 (LDEEDTDFEEDNEN) has biased composition (acidic residues). Threonine 477 is subject to Phosphothreonine. The span at 498-511 (YGDGPGGQLLGERA) shows a compositional bias: gly residues.

The protein belongs to the protein kinase superfamily. NEK Ser/Thr protein kinase family. NIMA subfamily. Interacts with PXN, PRLR, VAV1 and VAV2 and this interaction is prolactin-dependent. It depends on Mg(2+) as a cofactor. In terms of processing, phosphorylation at Thr-477 regulates its catalytic activity. As to expression, brain.

The protein resides in the cytoplasm. It is found in the cell projection. Its subcellular location is the axon. The catalysed reaction is L-seryl-[protein] + ATP = O-phospho-L-seryl-[protein] + ADP + H(+). The enzyme catalyses L-threonyl-[protein] + ATP = O-phospho-L-threonyl-[protein] + ADP + H(+). Functionally, protein kinase which influences neuronal morphogenesis and polarity through effects on microtubules. Regulates microtubule acetylation in neurons. Contributes to prolactin-mediated phosphorylation of PXN and VAV2. The polypeptide is Serine/threonine-protein kinase Nek3 (Nek3) (Mus musculus (Mouse)).